The chain runs to 136 residues: MWLPLPLLLGLLQLQPILSYQIDWNKLERINRGKVESCGGUQLNRLKEVKGFVTEDLPLYHNLEMKHIPGADPELVLITSRYEELERIPLSDMKRDEINQLLKDLGFYRKSSPDAPVPAEFKMAPARASGDTKEDL.

The signal sequence occupies residues 1-19 (MWLPLPLLLGLLQLQPILS). Active-site nucleophile residues include cysteine 38 and selenocysteine 41. Residues 38-41 (CGGU) constitute a cross-link (cysteinyl-selenocysteine (Cys-Sec)). Selenocysteine 41 is a non-standard amino acid (selenocysteine). A disordered region spans residues 111 to 136 (SSPDAPVPAEFKMAPARASGDTKEDL). The Prevents secretion from ER signature appears at 133 to 136 (KEDL).

The protein belongs to the selenoprotein M/F family.

It is found in the endoplasmic reticulum. May function as a thiol-disulfide oxidoreductase that participates in disulfide bond formation. The polypeptide is Selenoprotein M (selenom) (Xenopus laevis (African clawed frog)).